A 500-amino-acid polypeptide reads, in one-letter code: Lariat debranching enzyme (500 aa).

A disordered region spans residues 1–25; that stretch reads MSSKNPVDEQPCCGSHEGSHQDPAP. A divalent metal cation is bound by residues cysteine 48, histidine 50, aspartate 79, and asparagine 124. Residues 164-194 are lariat recognition loop; the sequence is SGIFSQGDFQFSHYERPSFSERDVKSAYHVR. A divalent metal cation is bound by residues histidine 222, histidine 274, and histidine 276. The tract at residues 453–500 is disordered; the sequence is DDANAKPNQDDVDFGDEDFVIDRGHTSDEPEAKKSRLDEDKFEAVPSE. Residues 462–471 show a composition bias toward acidic residues; it reads DDVDFGDEDF. Residues 472–500 are compositionally biased toward basic and acidic residues; sequence VIDRGHTSDEPEAKKSRLDEDKFEAVPSE.

This sequence belongs to the lariat debranching enzyme family. It depends on Fe(2+) as a cofactor. Zn(2+) is required as a cofactor. Requires Mn(2+) as cofactor.

It localises to the nucleus. Active in presence of diverse metals including Fe(2+), Zn(2+), Mn(2+). Binds two metal cations in two adjacent alpha and beta metal-binding pockets. Functionally, cleaves the 2'-5' phosphodiester linkage at the branch point of lariat intron pre-mRNAs after splicing and converts them into linear molecules that are subsequently degraded. It thereby facilitates ribonucleotide turnover. The sequence is that of Lariat debranching enzyme from Caenorhabditis elegans.